A 242-amino-acid chain; its full sequence is Glycerol-3-phosphate acyltransferase (242 aa).

6 consecutive transmembrane segments (helical) span residues 7 to 27 (ISLL…IMFA), 61 to 81 (IAIG…ILLI), 102 to 122 (YYLT…PVYF), 135 to 155 (GFVF…WWTI), 162 to 182 (VSLA…IPWL), and 201 to 221 (DWYI…IIIW).

It belongs to the PlsY family. Probably interacts with PlsX.

It is found in the cell membrane. It catalyses the reaction an acyl phosphate + sn-glycerol 3-phosphate = a 1-acyl-sn-glycero-3-phosphate + phosphate. The protein operates within lipid metabolism; phospholipid metabolism. Functionally, catalyzes the transfer of an acyl group from acyl-phosphate (acyl-PO(4)) to glycerol-3-phosphate (G3P) to form lysophosphatidic acid (LPA). This enzyme utilizes acyl-phosphate as fatty acyl donor, but not acyl-CoA or acyl-ACP. The polypeptide is Glycerol-3-phosphate acyltransferase (Mycoplasmoides gallisepticum (strain R(low / passage 15 / clone 2)) (Mycoplasma gallisepticum)).